The primary structure comprises 879 residues: Alanine--tRNA ligase (879 aa).

Residues H567, H571, C669, and H673 each coordinate Zn(2+).

It belongs to the class-II aminoacyl-tRNA synthetase family. Zn(2+) serves as cofactor.

The protein resides in the cytoplasm. The catalysed reaction is tRNA(Ala) + L-alanine + ATP = L-alanyl-tRNA(Ala) + AMP + diphosphate. Catalyzes the attachment of alanine to tRNA(Ala) in a two-step reaction: alanine is first activated by ATP to form Ala-AMP and then transferred to the acceptor end of tRNA(Ala). Also edits incorrectly charged Ser-tRNA(Ala) and Gly-tRNA(Ala) via its editing domain. In Lactobacillus acidophilus (strain ATCC 700396 / NCK56 / N2 / NCFM), this protein is Alanine--tRNA ligase.